A 416-amino-acid polypeptide reads, in one-letter code: 3-phosphoshikimate 1-carboxyvinyltransferase (416 aa).

3 residues coordinate 3-phosphoshikimate: Lys-20, Ser-21, and Arg-25. Lys-20 provides a ligand contact to phosphoenolpyruvate. Phosphoenolpyruvate-binding residues include Gly-88 and Arg-116. 3-phosphoshikimate contacts are provided by Ser-159, Ser-160, Gln-161, Ser-186, Asp-300, and Lys-327. Gln-161 is a phosphoenolpyruvate binding site. Asp-300 functions as the Proton acceptor in the catalytic mechanism. The phosphoenolpyruvate site is built by Arg-331 and Arg-373.

The protein belongs to the EPSP synthase family. In terms of assembly, monomer.

It is found in the cytoplasm. It catalyses the reaction 3-phosphoshikimate + phosphoenolpyruvate = 5-O-(1-carboxyvinyl)-3-phosphoshikimate + phosphate. Its pathway is metabolic intermediate biosynthesis; chorismate biosynthesis. Functionally, catalyzes the transfer of the enolpyruvyl moiety of phosphoenolpyruvate (PEP) to the 5-hydroxyl of shikimate-3-phosphate (S3P) to produce enolpyruvyl shikimate-3-phosphate and inorganic phosphate. This is 3-phosphoshikimate 1-carboxyvinyltransferase from Archaeoglobus fulgidus (strain ATCC 49558 / DSM 4304 / JCM 9628 / NBRC 100126 / VC-16).